A 143-amino-acid polypeptide reads, in one-letter code: Calcitonin (143 aa).

The first 25 residues, 1-25, serve as a signal peptide directing secretion; sequence MGFGKSSPFLAFSILVLCQAGSLQA. A propeptide spanning residues 26–84 is cleaved from the precursor; the sequence is TPLRSALETLPDPGALSEKEGRLLLAALVKAYVQRKTNELEQEEEQEETEDSSLDSSRA. Serine 42 is subject to Phosphoserine. A disordered region spans residues 62-86; the sequence is TNELEQEEEQEETEDSSLDSSRAKR. A compositionally biased stretch (acidic residues) spans 65–78; it reads LEQEEEQEETEDSS. A disulfide bridge links cysteine 87 with cysteine 93. The segment at 112–143 is disordered; that stretch reads GFGPETPGKKRDIANSLEKDLSSHFGVPTDAN. The residue at position 118 (proline 118) is a Proline amide. Positions 118-133 are enriched in basic and acidic residues; that stretch reads PGKKRDIANSLEKDLS. A propeptide spanning residues 122–143 is cleaved from the precursor; that stretch reads RDIANSLEKDLSSHFGVPTDAN.

Belongs to the calcitonin family.

The protein resides in the secreted. Functionally, calcitonin is a peptide hormone that causes a rapid but short-lived drop in the level of calcium and phosphate in blood by promoting the incorporation of those ions in the bones. Calcitonin function is mediated by the calcitonin receptor/CALCR and the CALCR-RAMP2 (AMYR2) receptor complex. The protein is Calcitonin (CALCA) of Ovis aries (Sheep).